The chain runs to 424 residues: Histidinol dehydrogenase (424 aa).

NAD(+) is bound by residues Y121, Q183, and N206. Positions 229, 251, and 254 each coordinate substrate. Zn(2+) is bound by residues Q251 and H254. Catalysis depends on proton acceptor residues E319 and H320. Substrate-binding residues include H320, D353, E407, and H412. Residue D353 coordinates Zn(2+). H412 lines the Zn(2+) pocket.

The protein belongs to the histidinol dehydrogenase family. The cofactor is Zn(2+).

The catalysed reaction is L-histidinol + 2 NAD(+) + H2O = L-histidine + 2 NADH + 3 H(+). It participates in amino-acid biosynthesis; L-histidine biosynthesis; L-histidine from 5-phospho-alpha-D-ribose 1-diphosphate: step 9/9. Catalyzes the sequential NAD-dependent oxidations of L-histidinol to L-histidinaldehyde and then to L-histidine. The chain is Histidinol dehydrogenase from Geobacillus kaustophilus (strain HTA426).